Consider the following 301-residue polypeptide: GTPase Era (301 aa).

The region spanning 7–175 (YCGFIAIVGR…AAIVRKHLPE (169 aa)) is the Era-type G domain. The tract at residues 15 to 22 (GRPNVGKS) is G1. A GTP-binding site is contributed by 15–22 (GRPNVGKS). The G2 stretch occupies residues 41–45 (QTTRH). Residues 62–65 (DTPG) are G3. GTP is bound by residues 62 to 66 (DTPGL) and 124 to 127 (NKVD). The interval 124 to 127 (NKVD) is G4. The tract at residues 154–156 (ISA) is G5. Residues 206–283 (LGAELPYSVT…HLELWVKVKS (78 aa)) form the KH type-2 domain.

This sequence belongs to the TRAFAC class TrmE-Era-EngA-EngB-Septin-like GTPase superfamily. Era GTPase family. Monomer.

Its subcellular location is the cytoplasm. It localises to the cell inner membrane. In terms of biological role, an essential GTPase that binds both GDP and GTP, with rapid nucleotide exchange. Plays a role in 16S rRNA processing and 30S ribosomal subunit biogenesis and possibly also in cell cycle regulation and energy metabolism. This chain is GTPase Era, found in Escherichia fergusonii (strain ATCC 35469 / DSM 13698 / CCUG 18766 / IAM 14443 / JCM 21226 / LMG 7866 / NBRC 102419 / NCTC 12128 / CDC 0568-73).